The following is a 56-amino-acid chain: Cytochrome b-c1 complex subunit 10 (56 aa).

Residues 1 to 12 (MVTRFLGPRYRE) lie on the Mitochondrial matrix side of the membrane. The chain crosses the membrane as a helical span at residues 13–35 (LVKNWVPTAYTWGAVGAVGLVWA). Residues 36–56 (TDWRLILDWVPYINGKFKKDN) are Mitochondrial intermembrane-facing.

The protein belongs to the UQCR11/QCR10 family. As to quaternary structure, component of the ubiquinol-cytochrome c oxidoreductase (cytochrome b-c1 complex, complex III, CIII), a multisubunit enzyme composed of 11 subunits. The complex is composed of 3 respiratory subunits cytochrome b, cytochrome c1 and Rieske protein UQCRFS1, 2 core protein subunits UQCRC1/QCR1 and UQCRC2/QCR2, and 6 low-molecular weight protein subunits UQCRH/QCR6, UQCRB/QCR7, UQCRQ/QCR8, UQCR10/QCR9, UQCR11/QCR10 and subunit 9, the cleavage product of Rieske protein UQCRFS1. The complex exists as an obligatory dimer and forms supercomplexes (SCs) in the inner mitochondrial membrane with NADH-ubiquinone oxidoreductase (complex I, CI) and cytochrome c oxidase (complex IV, CIV), resulting in different assemblies (supercomplex SCI(1)III(2)IV(1) and megacomplex MCI(2)III(2)IV(2)).

It localises to the mitochondrion inner membrane. Its function is as follows. Component of the ubiquinol-cytochrome c oxidoreductase, a multisubunit transmembrane complex that is part of the mitochondrial electron transport chain which drives oxidative phosphorylation. The respiratory chain contains 3 multisubunit complexes succinate dehydrogenase (complex II, CII), ubiquinol-cytochrome c oxidoreductase (cytochrome b-c1 complex, complex III, CIII) and cytochrome c oxidase (complex IV, CIV), that cooperate to transfer electrons derived from NADH and succinate to molecular oxygen, creating an electrochemical gradient over the inner membrane that drives transmembrane transport and the ATP synthase. The cytochrome b-c1 complex catalyzes electron transfer from ubiquinol to cytochrome c, linking this redox reaction to translocation of protons across the mitochondrial inner membrane, with protons being carried across the membrane as hydrogens on the quinol. In the process called Q cycle, 2 protons are consumed from the matrix, 4 protons are released into the intermembrane space and 2 electrons are passed to cytochrome c. QCR10 has a role in CIII assembly and RIP1 stability. The polypeptide is Cytochrome b-c1 complex subunit 10 (UQCR11) (Homo sapiens (Human)).